The chain runs to 1214 residues: Peregrin (1214 aa).

The C2H2-type zinc finger occupies 21 to 47 (YECPVETCRKVYKSYSGIEYHLYHYDH). Disordered stretches follow at residues 43 to 87 (YHYD…SPGR) and 118 to 177 (VVSE…PKLP). Positions 58–67 (LRKHKKKGRQ) are enriched in basic residues. Positions 59–222 (RKHKKKGRQS…VEYDMDEEDY (164 aa)) are interaction with KAT6A and KAT6B. Over residues 74–85 (QSPSPSEVSQSP) the composition is skewed to low complexity. Residues 119 to 130 (VSEDEEAPEEAP) are compositionally biased toward acidic residues. Serine 120 carries the phosphoserine modification. Lysine 147 carries the post-translational modification N6-acetyllysine. Over residues 148-167 (SGKHKNKEKRKDSNHHHHHN) the composition is skewed to basic residues. Serine 238 carries the phosphoserine modification. The segment at 273–323 (DAVCCICNDGECQNSNVILFCDMCNLAVHQECYGVPYIPEGQWLCRRCLQS) adopts a PHD-type 1 zinc-finger fold. The segment at 327–360 (AVDCALCPNKGGAFKQTDDGRWAHVVCALWIPEV) adopts a C2HC pre-PHD-type zinc-finger fold. Residues 384-448 (LTCYICKQRG…RKTAYCDIHT (65 aa)) form a PHD-type 2 zinc finger. Residues 448-489 (TPPGSARRLPALSHSEGEEDEDEEEDEGKGWSSEKVKKAKAK) form a disordered region. Phosphoserine occurs at positions 460 and 462. The segment covering 464-474 (GEEDEDEEEDE) has biased composition (acidic residues). Residues 501–821 (LAEKRAAAPV…IKKEMTALRR (321 aa)) are interaction with MEAF6 and ING5. The segment at 543 to 1079 (YWTLKRQSRN…RGAGWLSEDE (537 aa)) is required for RUNX1 and RUNX2 transcriptional activation. N6-acetyllysine is present on lysine 580. In terms of domain architecture, Bromo spans 628-732 (MQLTPFLILL…EQGGAVLRQA (105 aa)). Residues 819 to 1062 (LRRKLAHQRE…VGTGRGVGHS (244 aa)) are disordered. Basic and acidic residues predominate over residues 825–838 (HQRETGRDGPERHG). Threonine 858 is subject to Phosphothreonine. Low complexity predominate over residues 858–871 (TDSAAEESSSQETS). A phosphoserine mark is found at serine 860, serine 917, serine 922, and serine 926. Residues 993–1021 (SLPRSSSDSESSSSSSSSAASDRTSTTPS) are compositionally biased toward low complexity. Serine 1076 carries the post-translational modification Phosphoserine. Residues 1085–1168 (ALDLVWAKCR…RTKLVPLGVN (84 aa)) form the PWWP domain. Phosphoserine is present on serine 1187.

As to quaternary structure, component of some HBO1 complex composed of KAT7/HBO1, MEAF6, ING5, and BRPF1. Component of the MOZ/MORF complex composed at least of ING5, KAT6A, KAT6B, MEAF6 and one of BRPF1, BRD1/BRPF2 and BRPF3. Interacts (via PHD-type zinc finger domains) with unmethylated histone H3 at 'Lys-4' (H3K4me0). Interacts with trimethylated 'Lys-36' of histone H3 (H3K36me3). Interacts with ING5; interaction directs BRPF1 to H4K4me3-enriched chromatin at the 5' of active genes. Interacts with KAT7. Acetylated by KAT6A. High levels in testis.

It is found in the nucleus. It localises to the chromosome. Its subcellular location is the cytoplasm. In terms of biological role, scaffold subunit of various histone acetyltransferase (HAT) complexes, such as the MOZ/MORF and HBO1 complexes, which have a histone H3 acetyltransferase activity. Plays a key role in HBO1 complex by directing KAT7/HBO1 specificity towards histone H3 'Lys-14' acetylation (H3K14ac). Some HAT complexes preferentially mediate histone H3 'Lys-23' (H3K23ac) acetylation. Positively regulates the transcription of RUNX1 and RUNX2. The protein is Peregrin of Homo sapiens (Human).